A 515-amino-acid chain; its full sequence is Zinc-binding protein AdcA (515 aa).

A signal peptide spans 1–28; sequence MKKKILLMMSLISVFFAWQLTQAKQVLA. H66 lines the Zn(2+) pocket. Residues 125 to 148 are disordered; the sequence is DHHHEDADKKHEHNKHSEEGHNHA. The tract at residues 129 to 148 is his-rich loop; it reads EDADKKHEHNKHSEEGHNHA. Zn(2+)-binding residues include H152, H216, and E291.

It belongs to the bacterial solute-binding protein 9 family.

Functionally, part of the ATP-binding cassette (ABC) transport system AdcABC involved in zinc import. Binds zinc with high affinity and specificity and delivers it to the membrane permease for translocation into the cytoplasm. This Streptococcus pyogenes serotype M18 (strain MGAS8232) protein is Zinc-binding protein AdcA (adcA).